Consider the following 159-residue polypeptide: MDFRIGQGYDVHALVPGRPLIIGGVTIPYERGLLGHSDADVLLHAITDAIFGAAAMGDIGRHFSDTDAKFAGADSRVLLRECFARVKAAGFSIANVDSSVVAQAPKLAPHIEGMRANIAADLGLPVERVNVKAKTNEKLGYLGRGEGIEAQAAVLLIKN.

2 residues coordinate a divalent metal cation: D10 and H12. 4-CDP-2-C-methyl-D-erythritol 2-phosphate is bound by residues 10-12 (DVH) and 36-37 (HS). H44 contacts a divalent metal cation. Residues 58–60 (DIG), 63–67 (FSDTD), and R144 each bind 4-CDP-2-C-methyl-D-erythritol 2-phosphate.

It belongs to the IspF family. Homotrimer. The cofactor is a divalent metal cation.

It carries out the reaction 4-CDP-2-C-methyl-D-erythritol 2-phosphate = 2-C-methyl-D-erythritol 2,4-cyclic diphosphate + CMP. It participates in isoprenoid biosynthesis; isopentenyl diphosphate biosynthesis via DXP pathway; isopentenyl diphosphate from 1-deoxy-D-xylulose 5-phosphate: step 4/6. Its function is as follows. Involved in the biosynthesis of isopentenyl diphosphate (IPP) and dimethylallyl diphosphate (DMAPP), two major building blocks of isoprenoid compounds. Catalyzes the conversion of 4-diphosphocytidyl-2-C-methyl-D-erythritol 2-phosphate (CDP-ME2P) to 2-C-methyl-D-erythritol 2,4-cyclodiphosphate (ME-CPP) with a corresponding release of cytidine 5-monophosphate (CMP). The sequence is that of 2-C-methyl-D-erythritol 2,4-cyclodiphosphate synthase from Paraburkholderia phytofirmans (strain DSM 17436 / LMG 22146 / PsJN) (Burkholderia phytofirmans).